A 98-amino-acid polypeptide reads, in one-letter code: Guanine nucleotide-binding protein subunit gamma 1 (98 aa).

The 80-residue stretch at 19 to 98 (GKHRILAELA…GGEGCRCLIL (80 aa)) folds into the G protein gamma domain. Residues 20–50 (KHRILAELARVEQEVAFLEKELKEVENTDIV) are a coiled coil. Residues 88 to 94 (NGGEGCR) are regulates lipidation and cell membrane subcellular localization. Cys-93 carries S-palmitoyl cysteine lipidation. A Cysteine methyl ester modification is found at Cys-95. Cys-95 is lipidated: S-farnesyl cysteine. A propeptide spans 96 to 98 (LIL) (removed in mature form).

G proteins are composed of 3 units, alpha, beta and gamma. Interacts with the beta subunit GB1. The dimer GB1-GG1 interacts with NDL1, NDL2 and NDL3. Binds to NUDT7. As to expression, mostly expressed in seedlings (especially at the hypocotyl/root junction), young cauline leaves, open flowers, and floral stems, and, to a lower extent, in roots (restricted to the stele), rosette leaves (restricted to veins), siliques, and unopened floral buds. Also present in hydathods.

It localises to the cell membrane. The protein resides in the golgi apparatus membrane. It is found in the golgi apparatus. Its subcellular location is the trans-Golgi network membrane. The protein localises to the cytoplasm. Its function is as follows. Guanine nucleotide-binding proteins (G proteins) are involved as a modulator or transducer in various transmembrane signaling systems. The beta and gamma chains are required for the GTPase activity, for replacement of GDP by GTP, and for G protein-effector interaction. Involved in the abscisic acid (ABA) and ethylene signaling pathways. Regulates acropetal transport of auxin (IAA) in roots and hypocotyls, and thus modulates root architecture (e.g. lateral root formation). The heterotrimeric G-protein controls defense responses to necrotrophic and vascular fungi probably by modulating cell wall-related genes expression; involved in resistance to fungal pathogens such as Alternaria brassicicola, Plectosphaerella cucumerina and Fusarium oxysporum. The chain is Guanine nucleotide-binding protein subunit gamma 1 (GG1) from Arabidopsis thaliana (Mouse-ear cress).